The chain runs to 377 residues: Succinyl-diaminopimelate desuccinylase (377 aa).

His66 provides a ligand contact to Zn(2+). Asp68 is a catalytic residue. Asp99 is a Zn(2+) binding site. Catalysis depends on Glu133, which acts as the Proton acceptor. Zn(2+) contacts are provided by Glu134, Glu162, and His348.

This sequence belongs to the peptidase M20A family. DapE subfamily. In terms of assembly, homodimer. Zn(2+) serves as cofactor. Co(2+) is required as a cofactor.

The enzyme catalyses N-succinyl-(2S,6S)-2,6-diaminopimelate + H2O = (2S,6S)-2,6-diaminopimelate + succinate. It participates in amino-acid biosynthesis; L-lysine biosynthesis via DAP pathway; LL-2,6-diaminopimelate from (S)-tetrahydrodipicolinate (succinylase route): step 3/3. Its function is as follows. Catalyzes the hydrolysis of N-succinyl-L,L-diaminopimelic acid (SDAP), forming succinate and LL-2,6-diaminopimelate (DAP), an intermediate involved in the bacterial biosynthesis of lysine and meso-diaminopimelic acid, an essential component of bacterial cell walls. This Alcanivorax borkumensis (strain ATCC 700651 / DSM 11573 / NCIMB 13689 / SK2) protein is Succinyl-diaminopimelate desuccinylase.